Reading from the N-terminus, the 389-residue chain is Putative sugar efflux transporter DR_1322 (389 aa).

12 helical membrane passes run 10–30 (AVLL…LFAV), 34–54 (GMTP…AVLV), 69–89 (KPLV…LSGV), 96–116 (MATG…VFAF), 135–155 (VLRA…AAVL), 161–181 (SGVF…LLFI), 211–231 (GWVV…MVMF), 246–266 (VGFL…LFVL), 281–301 (LLLF…PLLI), 308–328 (AAVL…LMPG), 341–361 (SVVG…VFGY), and 363–383 (PVFL…LWAT).

It belongs to the major facilitator superfamily. Set transporter family.

The protein localises to the cell membrane. In terms of biological role, involved in the efflux of sugars. The physiological role may be the detoxification of non-metabolizable sugar analogs. The polypeptide is Putative sugar efflux transporter DR_1322 (Deinococcus radiodurans (strain ATCC 13939 / DSM 20539 / JCM 16871 / CCUG 27074 / LMG 4051 / NBRC 15346 / NCIMB 9279 / VKM B-1422 / R1)).